Reading from the N-terminus, the 399-residue chain is Tyrosine--tRNA ligase 2 (399 aa).

Residues 43 to 52 carry the 'HIGH' region motif; the sequence is PTAPDLHLGH. A 'KMSKS' region motif is present at residues 227–231; sequence KMSKS. Residue lysine 230 coordinates ATP. The S4 RNA-binding domain maps to 338 to 398; sequence ITLLDLCSVA…IGKRYKFRIG (61 aa).

This sequence belongs to the class-I aminoacyl-tRNA synthetase family. TyrS type 2 subfamily. In terms of assembly, homodimer.

The protein localises to the cytoplasm. It carries out the reaction tRNA(Tyr) + L-tyrosine + ATP = L-tyrosyl-tRNA(Tyr) + AMP + diphosphate + H(+). Catalyzes the attachment of tyrosine to tRNA(Tyr) in a two-step reaction: tyrosine is first activated by ATP to form Tyr-AMP and then transferred to the acceptor end of tRNA(Tyr). The polypeptide is Tyrosine--tRNA ligase 2 (Photorhabdus laumondii subsp. laumondii (strain DSM 15139 / CIP 105565 / TT01) (Photorhabdus luminescens subsp. laumondii)).